Reading from the N-terminus, the 436-residue chain is Mannitol-binding protein (436 aa).

The N-terminal stretch at 1–22 is a signal peptide; sequence MNDSIKACLAAACLALPLLAQG.

The protein belongs to the bacterial solute-binding protein 1 family.

It is found in the periplasm. Binds mannitol with high affinity. This is Mannitol-binding protein from Pseudomonas aeruginosa (strain ATCC 15692 / DSM 22644 / CIP 104116 / JCM 14847 / LMG 12228 / 1C / PRS 101 / PAO1).